Here is a 167-residue protein sequence, read N- to C-terminus: G/U mismatch-specific DNA glycosylase (167 aa).

This sequence belongs to the uracil-DNA glycosylase (UDG) superfamily. TDG/mug family. Binds DNA as a monomer.

The protein localises to the cytoplasm. The enzyme catalyses Specifically hydrolyzes mismatched double-stranded DNA and polynucleotides, releasing free uracil.. In terms of biological role, excises ethenocytosine and uracil, which can arise by alkylation or deamination of cytosine, respectively, from the corresponding mispairs with guanine in ds-DNA. It is capable of hydrolyzing the carbon-nitrogen bond between the sugar-phosphate backbone of the DNA and the mispaired base. The complementary strand guanine functions in substrate recognition. Required for DNA damage lesion repair in stationary-phase cells. The protein is G/U mismatch-specific DNA glycosylase of Pectobacterium carotovorum subsp. carotovorum (strain PC1).